A 129-amino-acid chain; its full sequence is Cocaine- and amphetamine-regulated transcript protein (129 aa).

The N-terminal stretch at M1–A27 is a signal peptide. Y41 carries the post-translational modification Phosphotyrosine. Residue S48 is modified to Phosphoserine. Intrachain disulfides connect C95–C113, C101–C121, and C115–C128.

It belongs to the CART family.

It localises to the secreted. In terms of biological role, satiety factor closely associated with the actions of leptin and neuropeptide y; this anorectic peptide inhibits both normal and starvation-induced feeding and completely blocks the feeding response induced by neuropeptide Y and regulated by leptin in the hypothalamus. In Mus musculus (Mouse), this protein is Cocaine- and amphetamine-regulated transcript protein (Cartpt).